The primary structure comprises 502 residues: ATP synthase subunit alpha (502 aa).

Position 169–176 (169–176 (GDRQTGKT)) interacts with ATP.

The protein belongs to the ATPase alpha/beta chains family. As to quaternary structure, F-type ATPases have 2 components, CF(1) - the catalytic core - and CF(0) - the membrane proton channel. CF(1) has five subunits: alpha(3), beta(3), gamma(1), delta(1), epsilon(1). CF(0) has three main subunits: a(1), b(2) and c(9-12). The alpha and beta chains form an alternating ring which encloses part of the gamma chain. CF(1) is attached to CF(0) by a central stalk formed by the gamma and epsilon chains, while a peripheral stalk is formed by the delta and b chains.

The protein localises to the cell inner membrane. The enzyme catalyses ATP + H2O + 4 H(+)(in) = ADP + phosphate + 5 H(+)(out). Produces ATP from ADP in the presence of a proton gradient across the membrane. The alpha chain is a regulatory subunit. This is ATP synthase subunit alpha from Geotalea uraniireducens (strain Rf4) (Geobacter uraniireducens).